The primary structure comprises 83 residues: U5-theraphotoxin-Hs1a 4 (83 aa).

Positions 1–21 (MKTSMFLTLTGLVLLFVDCYA) are cleaved as a signal peptide. Residues 22–49 (SESEEKEFPKELLSSIFAADSDFKVEER) constitute a propeptide that is removed on maturation. 3 disulfides stabilise this stretch: C51–C63, C56–C68, and C62–C75.

It belongs to the neurotoxin 10 (Hwtx-1) family. 51 (Hntx-8) subfamily. Hntx-8 sub-subfamily. As to expression, expressed by the venom gland.

Its subcellular location is the secreted. Functionally, agglutinates erythrocytes. The chain is U5-theraphotoxin-Hs1a 4 from Cyriopagopus schmidti (Chinese bird spider).